We begin with the raw amino-acid sequence, 178 residues long: Adenine phosphoribosyltransferase (178 aa).

The protein belongs to the purine/pyrimidine phosphoribosyltransferase family. In terms of assembly, homodimer.

The protein localises to the cytoplasm. The enzyme catalyses AMP + diphosphate = 5-phospho-alpha-D-ribose 1-diphosphate + adenine. Its pathway is purine metabolism; AMP biosynthesis via salvage pathway; AMP from adenine: step 1/1. In terms of biological role, catalyzes a salvage reaction resulting in the formation of AMP, that is energically less costly than de novo synthesis. The protein is Adenine phosphoribosyltransferase of Pseudoalteromonas atlantica (strain T6c / ATCC BAA-1087).